A 415-amino-acid chain; its full sequence is Serine--tRNA ligase (415 aa).

L-serine is bound at residue 230–232 (TAE). 261–263 (RKE) is an ATP binding site. Glu-284 is an L-serine binding site. 348–351 (EISS) lines the ATP pocket. Ser-382 serves as a coordination point for L-serine.

It belongs to the class-II aminoacyl-tRNA synthetase family. Type-1 seryl-tRNA synthetase subfamily. Homodimer. The tRNA molecule binds across the dimer.

It is found in the cytoplasm. The enzyme catalyses tRNA(Ser) + L-serine + ATP = L-seryl-tRNA(Ser) + AMP + diphosphate + H(+). It catalyses the reaction tRNA(Sec) + L-serine + ATP = L-seryl-tRNA(Sec) + AMP + diphosphate + H(+). Its pathway is aminoacyl-tRNA biosynthesis; selenocysteinyl-tRNA(Sec) biosynthesis; L-seryl-tRNA(Sec) from L-serine and tRNA(Sec): step 1/1. Catalyzes the attachment of serine to tRNA(Ser). Is also able to aminoacylate tRNA(Sec) with serine, to form the misacylated tRNA L-seryl-tRNA(Sec), which will be further converted into selenocysteinyl-tRNA(Sec). This Sulfurimonas denitrificans (strain ATCC 33889 / DSM 1251) (Thiomicrospira denitrificans (strain ATCC 33889 / DSM 1251)) protein is Serine--tRNA ligase.